A 320-amino-acid polypeptide reads, in one-letter code: Myoblast determination protein 1 (320 aa).

Residue M1 forms a Peptide (Met-Gly) (interchain with G-Cter in ubiquitin) linkage. The residue at position 104 (K104) is an N6-methyllysine; by EHMT2. One can recognise a bHLH domain in the interval 109–160 (DRRKAATMRERRRLSKVNEAFETLKRCTSSNPNQRLPKVEILRNAIRYIEGL). Disordered regions lie at residues 174-219 (AAAA…PPSG) and 262-320 (ESPA…YQVL). Composition is skewed to polar residues over residues 197–207 (SDASSPRSNCS) and 291–301 (GESSGDPTQSP).

In terms of assembly, efficient DNA binding requires dimerization with another bHLH protein. Seems to form active heterodimers with ITF-2. Interacts with SUV39H1. Interacts with DDX5. Interacts with CHD2. Interacts with TSC22D3. Interacts with SETD3. Interacts with P-TEFB complex; promotes the transcriptional activity of MYOD1 through its CDK9-mediated phosphorylation. Interacts with CSRP3. Interacts with NUPR1. In terms of processing, phosphorylated by CDK9. This phosphorylation promotes its function in muscle differentiation. Acetylated by a complex containing EP300 and PCAF. The acetylation is essential to activate target genes. Conversely, its deacetylation by SIRT1 inhibits its function. Post-translationally, ubiquitinated on the N-terminus; which is required for proteasomal degradation. In terms of processing, methylation at Lys-104 by EHMT2/G9a inhibits myogenic activity.

The protein resides in the nucleus. Functionally, acts as a transcriptional activator that promotes transcription of muscle-specific target genes and plays a role in muscle differentiation. Together with MYF5 and MYOG, co-occupies muscle-specific gene promoter core region during myogenesis. Induces fibroblasts to differentiate into myoblasts. Interacts with and is inhibited by the twist protein. This interaction probably involves the basic domains of both proteins. The protein is Myoblast determination protein 1 (MYOD1) of Homo sapiens (Human).